A 198-amino-acid chain; its full sequence is Nucleoside triphosphate pyrophosphatase (198 aa).

Residue Asp-70 is the Proton acceptor of the active site.

Belongs to the Maf family. A divalent metal cation serves as cofactor.

The protein localises to the cytoplasm. It catalyses the reaction a ribonucleoside 5'-triphosphate + H2O = a ribonucleoside 5'-phosphate + diphosphate + H(+). The catalysed reaction is a 2'-deoxyribonucleoside 5'-triphosphate + H2O = a 2'-deoxyribonucleoside 5'-phosphate + diphosphate + H(+). In terms of biological role, nucleoside triphosphate pyrophosphatase. May have a dual role in cell division arrest and in preventing the incorporation of modified nucleotides into cellular nucleic acids. This is Nucleoside triphosphate pyrophosphatase from Thermosynechococcus vestitus (strain NIES-2133 / IAM M-273 / BP-1).